Here is a 242-residue protein sequence, read N- to C-terminus: Small ribosomal subunit protein uS2 (242 aa).

This sequence belongs to the universal ribosomal protein uS2 family.

This Colwellia psychrerythraea (strain 34H / ATCC BAA-681) (Vibrio psychroerythus) protein is Small ribosomal subunit protein uS2.